Here is a 340-residue protein sequence, read N- to C-terminus: Ketol-acid reductoisomerase (NADP(+)) (340 aa).

In terms of domain architecture, KARI N-terminal Rossmann spans 1–183 (MAVTVYYDKD…GAGRTGIIET (183 aa)). Residues 26–29 (FGSQ), K49, S54, and 84–87 (DELQ) contribute to the NADP(+) site. H109 is a catalytic residue. G135 is a binding site for NADP(+). The KARI C-terminal knotted domain occupies 184-329 (TFKDETETDL…EKLRAMMPWI (146 aa)). The Mg(2+) site is built by D192, E196, E228, and E232. S253 provides a ligand contact to substrate.

It belongs to the ketol-acid reductoisomerase family. Mg(2+) is required as a cofactor.

The catalysed reaction is (2R)-2,3-dihydroxy-3-methylbutanoate + NADP(+) = (2S)-2-acetolactate + NADPH + H(+). The enzyme catalyses (2R,3R)-2,3-dihydroxy-3-methylpentanoate + NADP(+) = (S)-2-ethyl-2-hydroxy-3-oxobutanoate + NADPH + H(+). It functions in the pathway amino-acid biosynthesis; L-isoleucine biosynthesis; L-isoleucine from 2-oxobutanoate: step 2/4. The protein operates within amino-acid biosynthesis; L-valine biosynthesis; L-valine from pyruvate: step 2/4. Functionally, involved in the biosynthesis of branched-chain amino acids (BCAA). Catalyzes an alkyl-migration followed by a ketol-acid reduction of (S)-2-acetolactate (S2AL) to yield (R)-2,3-dihydroxy-isovalerate. In the isomerase reaction, S2AL is rearranged via a Mg-dependent methyl migration to produce 3-hydroxy-3-methyl-2-ketobutyrate (HMKB). In the reductase reaction, this 2-ketoacid undergoes a metal-dependent reduction by NADPH to yield (R)-2,3-dihydroxy-isovalerate. In Campylobacter hominis (strain ATCC BAA-381 / DSM 21671 / CCUG 45161 / LMG 19568 / NCTC 13146 / CH001A), this protein is Ketol-acid reductoisomerase (NADP(+)).